The primary structure comprises 216 residues: MAKAKEVKAKPIKGEEAEKLVYEYLRKTNRPYSATDVSANLKNVVSKQVAQKALEQLRDTGLIHGKLYGKQSVFVCLQDDLAAATPEELAEMEKQIQELKDEVSVVKTLYKEKCIELQALNNSLSPAEIREKIQSIDKEIEETSSKLESLRNGTVKQISKEAMQKTDKNYDFAKKGFSNRKKMFYDLWHLITDSLENPKQLWEKLGFETEGPIDLN.

The protein belongs to the HOP2 family. Interacts with mcp7.

Its subcellular location is the nucleus. Its function is as follows. Required for proper homologous pairing and efficient cross-over and intragenic recombination during meiosis. Acts indirectly in a process facilitating homologous recombination. Acts during mid- to late-horse-tail period. The sequence is that of Homologous-pairing protein 2 (meu13) from Schizosaccharomyces pombe (strain 972 / ATCC 24843) (Fission yeast).